We begin with the raw amino-acid sequence, 325 residues long: Hexaprenyl-diphosphate synthase large subunit ((2E,6E)-farnesyl-diphosphate specific) (325 aa).

3 residues coordinate isopentenyl diphosphate: Lys-45, Arg-48, and His-77. All-trans-hexaprenyl diphosphate-binding residues include Asp-84, Asp-88, and Arg-93. Positions 84 and 88 each coordinate Mg(2+). Arg-94 serves as a coordination point for isopentenyl diphosphate. Lys-170, Thr-171, and Gln-208 together coordinate all-trans-hexaprenyl diphosphate.

The protein belongs to the FPP/GGPP synthase family. In terms of assembly, dimer of heterodimer or heterotetramer composed of a small (Hexs-a) and large (Hexs-B) subunit. Mg(2+) is required as a cofactor.

It catalyses the reaction 3 isopentenyl diphosphate + (2E,6E)-farnesyl diphosphate = all-trans-hexaprenyl diphosphate + 3 diphosphate. Functionally, catalyzes the condensation of three molecules of isopentenyl diphosphate with farnesyl diphosphate (FPP) to yield (all-E)-hexaprenyl diphosphate (HexPP; C30), the precursor of the prenyl side chain of menaquinone-6. Large subunit Hexs-B catalyzes the condensation reaction and the final product chain length is cooperatively regulated by both the Hexs-A and Hexs-B subunits using the whole size of the hydrophobic cleft as a ruler. In Micrococcus luteus (Micrococcus lysodeikticus), this protein is Hexaprenyl-diphosphate synthase large subunit ((2E,6E)-farnesyl-diphosphate specific) (hexs-b).